We begin with the raw amino-acid sequence, 641 residues long: PWWP domain-containing DNA repair factor 3A (641 aa).

The disordered stretch occupies residues 98 to 329 (LNERQGSSSR…LEEDEDDEEP (232 aa)). A Phosphoserine modification is found at Ser-156. 2 stretches are compositionally biased toward basic and acidic residues: residues 194-203 (QDREASRKQQ) and 295-307 (ADTR…RPLS). Residue Ser-307 is modified to Phosphoserine. One can recognise a PWWP domain in the interval 343–404 (VGMLVWHKYQ…KHFDCKEKQA (62 aa)). The segment at 463–486 (TRFPQLSGGDPEEPVAGSPQGRRP) is disordered.

Belongs to the PWWP3A family. As to quaternary structure, interacts with TP53BP1 (via BRCT domain); the interaction is not dependent on its phosphorylation status. Binds nucleosomes. Interacts with trimethylated 'Lys-36' of histone H3 (H3K36me3) (in vitro).

The protein resides in the nucleus. Functionally, involved in the DNA damage response pathway by contributing to the maintenance of chromatin architecture. Recruited to the vicinity of DNA breaks by TP53BP1 and plays an accessory role to facilitate damage-induced chromatin changes and promoting chromatin relaxation. Required for efficient DNA repair and cell survival following DNA damage. The chain is PWWP domain-containing DNA repair factor 3A (PWWP3A) from Bos taurus (Bovine).